The following is a 465-amino-acid chain: Cysteine--tRNA ligase (465 aa).

Cysteine 27 lines the Zn(2+) pocket. Positions 29 to 39 (PTVYDDAHLGH) match the 'HIGH' region motif. Zn(2+) contacts are provided by cysteine 207, histidine 237, and glutamate 241. Residues 269–273 (KMSKS) carry the 'KMSKS' region motif. An ATP-binding site is contributed by lysine 272.

The protein belongs to the class-I aminoacyl-tRNA synthetase family. As to quaternary structure, monomer. It depends on Zn(2+) as a cofactor.

The protein localises to the cytoplasm. The catalysed reaction is tRNA(Cys) + L-cysteine + ATP = L-cysteinyl-tRNA(Cys) + AMP + diphosphate. The sequence is that of Cysteine--tRNA ligase (cysS) from Helicobacter pylori (strain ATCC 700392 / 26695) (Campylobacter pylori).